A 186-amino-acid chain; its full sequence is Interferon lambda-3 (186 aa).

The N-terminal stretch at 1 to 21 is a signal peptide; the sequence is MVCYGVTIILVGTLGSLLVGA. 3 cysteine pairs are disulfide-bonded: Cys31–Cys128, Cys65–Cys160, and Cys178–Cys185.

The protein belongs to the lambda interferon family.

The protein localises to the secreted. Its function is as follows. Cytokine which plays a critical role in the antiviral host defense, predominantly in the epithelial tissues. Acts as a ligand for the heterodimeric class II cytokine receptor composed of IL10RB and IFNLR1, and receptor engagement leads to the activation of the JAK/STAT signaling pathway resulting in the expression of IFN-stimulated genes (ISG), which mediate the antiviral state. Has a restricted receptor distribution and therefore restricted targets: is primarily active in epithelial cells and this cell type-selective action is because of the epithelial cell-specific expression of its receptor IFNLR1. Exhibits antiviral activity against the H5N1 influenza A virus. Induces the expression of the antiviral MX protein in epithelial-rich tissues, such as intestine, trachea and lung. The chain is Interferon lambda-3 (IFNL3) from Gallus gallus (Chicken).